The following is a 1301-amino-acid chain: DNA-directed RNA polymerase subunit beta (1301 aa).

It belongs to the RNA polymerase beta chain family. In terms of assembly, in plastids the minimal PEP RNA polymerase catalytic core is composed of four subunits: alpha, beta, beta', and beta''. When a (nuclear-encoded) sigma factor is associated with the core the holoenzyme is formed, which can initiate transcription.

It localises to the plastid. The protein resides in the chloroplast. It carries out the reaction RNA(n) + a ribonucleoside 5'-triphosphate = RNA(n+1) + diphosphate. DNA-dependent RNA polymerase catalyzes the transcription of DNA into RNA using the four ribonucleoside triphosphates as substrates. The sequence is that of DNA-directed RNA polymerase subunit beta from Chlorella vulgaris (Green alga).